Here is a 66-residue protein sequence, read N- to C-terminus: uncharacterized protein (66 aa).

Residues 1-18 (MSTTSSSSTFSTRTASLS) are compositionally biased toward low complexity. A disordered region spans residues 1–22 (MSTTSSSSTFSTRTASLSQSYT).

This is an uncharacterized protein from Schizosaccharomyces pombe (strain 972 / ATCC 24843) (Fission yeast).